Consider the following 565-residue polypeptide: Ubiquitin carboxyl-terminal hydrolase 21 (565 aa).

The segment covering 1-14 has biased composition (basic and acidic residues); it reads MPQASEHRLGRTRE. The segment at 1 to 103 is disordered; that stretch reads MPQASEHRLG…PPPTVALPLP (103 aa). A compositionally biased stretch (pro residues) spans 48 to 57; sequence MLRPLPPRPG. Residues 58-70 show a composition bias toward basic and acidic residues; sequence LPDERLKKLELGR. The Nuclear export signal signature appears at 134-152; the sequence is ELGAALSRLALRPEPPTLR. Positions 212–558 constitute a USP domain; it reads VGLRNLGNTC…EGYVLFYQLM (347 aa). Cys221 acts as the Nucleophile in catalysis. Zn(2+)-binding residues include Cys384, Cys387, Cys437, and Cys440. Residue His518 is the Proton acceptor of the active site.

This sequence belongs to the peptidase C19 family. USP21 subfamily. As to quaternary structure, interacts with BEND3. Highly expressed in heart, pancreas and skeletal muscle. Also expressed in brain, placenta, liver and kidney, and at very low level in lung.

Its subcellular location is the cytoplasm. It localises to the nucleus. The enzyme catalyses Thiol-dependent hydrolysis of ester, thioester, amide, peptide and isopeptide bonds formed by the C-terminal Gly of ubiquitin (a 76-residue protein attached to proteins as an intracellular targeting signal).. Functionally, deubiquitinates histone H2A, a specific tag for epigenetic transcriptional repression, thereby acting as a coactivator. Deubiquitination of histone H2A releaves the repression of di- and trimethylation of histone H3 at 'Lys-4', resulting in regulation of transcriptional initiation. Regulates gene expression via histone H2A deubiquitination. Deubiquitinates BAZ2A/TIP5 leading to its stabilization. Also capable of removing NEDD8 from NEDD8 conjugates but has no effect on Sentrin-1 conjugates. Also acts as a negative regulator of the ribosome quality control (RQC) by mediating deubiquitination of 40S ribosomal proteins RPS10/eS10 and RPS20/uS10, thereby antagonizing ZNF598-mediated 40S ubiquitination. The chain is Ubiquitin carboxyl-terminal hydrolase 21 from Homo sapiens (Human).